A 465-amino-acid polypeptide reads, in one-letter code: Argininosuccinate lyase (465 aa).

The protein belongs to the lyase 1 family. Argininosuccinate lyase subfamily.

It is found in the cytoplasm. The catalysed reaction is 2-(N(omega)-L-arginino)succinate = fumarate + L-arginine. The protein operates within amino-acid biosynthesis; L-arginine biosynthesis; L-arginine from L-ornithine and carbamoyl phosphate: step 3/3. This chain is Argininosuccinate lyase, found in Deinococcus deserti (strain DSM 17065 / CIP 109153 / LMG 22923 / VCD115).